A 204-amino-acid chain; its full sequence is High frequency lysogenization protein HflD homolog (204 aa).

The protein belongs to the HflD family.

It localises to the cytoplasm. The protein resides in the cell inner membrane. In Shewanella sediminis (strain HAW-EB3), this protein is High frequency lysogenization protein HflD homolog.